Here is a 204-residue protein sequence, read N- to C-terminus: Small ribosomal subunit protein uS4 (204 aa).

Residues 93–156 form the S4 RNA-binding domain; sequence SRLSSVLYHS…AKIPVIVEAV (64 aa).

This sequence belongs to the universal ribosomal protein uS4 family. As to quaternary structure, part of the 30S ribosomal subunit. Contacts protein S5. The interaction surface between S4 and S5 is involved in control of translational fidelity.

Its function is as follows. One of the primary rRNA binding proteins, it binds directly to 16S rRNA where it nucleates assembly of the body of the 30S subunit. In terms of biological role, with S5 and S12 plays an important role in translational accuracy. The sequence is that of Small ribosomal subunit protein uS4 from Wolbachia sp. subsp. Brugia malayi (strain TRS).